Reading from the N-terminus, the 194-residue chain is uncharacterized protein (194 aa).

2 CBS domains span residues 13 to 72 and 78 to 133; these read MSFP…PKDV and MSKK…LLEI. The region spanning 159–192 is the ACP-type MB domain; that stretch reads YINGICENCGYQGRVRLYQGRYLCDECIEEFEEK. Cys-164, Cys-167, Cys-182, and Cys-185 together coordinate Fe cation. Residues Cys-164, Cys-167, Cys-182, and Cys-185 each coordinate Zn(2+).

This is an uncharacterized protein from Methanocaldococcus jannaschii (strain ATCC 43067 / DSM 2661 / JAL-1 / JCM 10045 / NBRC 100440) (Methanococcus jannaschii).